The chain runs to 462 residues: A-type ATP synthase subunit B (462 aa).

Belongs to the ATPase alpha/beta chains family. In terms of assembly, has multiple subunits with at least A(3), B(3), C, D, E, F, H, I and proteolipid K(x).

It is found in the cell membrane. Component of the A-type ATP synthase that produces ATP from ADP in the presence of a proton gradient across the membrane. The B chain is a regulatory subunit. The chain is A-type ATP synthase subunit B from Methanococcus vannielii (strain ATCC 35089 / DSM 1224 / JCM 13029 / OCM 148 / SB).